The sequence spans 60 residues: Large ribosomal subunit protein uL30 (60 aa).

This sequence belongs to the universal ribosomal protein uL30 family. Part of the 50S ribosomal subunit.

This chain is Large ribosomal subunit protein uL30, found in Cupriavidus necator (strain ATCC 17699 / DSM 428 / KCTC 22496 / NCIMB 10442 / H16 / Stanier 337) (Ralstonia eutropha).